Here is a 163-residue protein sequence, read N- to C-terminus: MTKVLLGFMGVGKTTVSKHLSMHCKDMDAIIEAKIGMSIAAFFEQHGEIAFRTIESQVLKDLLFANDNSVIVTGGGVVVLQENRQLLRKNHQHNILLVASFETLYQRLKHDKKSQRPLFLKYSKEAFYEFYQQRMVFYEGLSDLVIRVDHRTPEEVANIIEGY.

10–15 (GVGKTT) serves as a coordination point for ATP. A Mg(2+)-binding site is contributed by Thr14. 3 residues coordinate substrate: Asp28, Arg52, and Gly75. Residue Arg116 participates in ATP binding. Arg134 is a substrate binding site. Arg151 provides a ligand contact to ATP.

It belongs to the shikimate kinase family. Monomer. Mg(2+) is required as a cofactor.

It localises to the cytoplasm. It catalyses the reaction shikimate + ATP = 3-phosphoshikimate + ADP + H(+). It participates in metabolic intermediate biosynthesis; chorismate biosynthesis; chorismate from D-erythrose 4-phosphate and phosphoenolpyruvate: step 5/7. Catalyzes the specific phosphorylation of the 3-hydroxyl group of shikimic acid using ATP as a cosubstrate. The chain is Shikimate kinase from Streptococcus pyogenes serotype M12 (strain MGAS2096).